The primary structure comprises 258 residues: Trans-aconitate 2-methyltransferase (258 aa).

Belongs to the methyltransferase superfamily. Tam family.

It is found in the cytoplasm. The catalysed reaction is trans-aconitate + S-adenosyl-L-methionine = (E)-3-(methoxycarbonyl)pent-2-enedioate + S-adenosyl-L-homocysteine. Its function is as follows. Catalyzes the S-adenosylmethionine monomethyl esterification of trans-aconitate. The chain is Trans-aconitate 2-methyltransferase from Yersinia pseudotuberculosis serotype O:1b (strain IP 31758).